The following is a 113-amino-acid chain: TYRO protein tyrosine kinase-binding protein (113 aa).

The signal sequence occupies residues 1 to 27 (MGGLEPCSRLLLLPLLLAVGGLRPVQA). The Extracellular segment spans residues 28–40 (QAQSDCSCSTVSP). The helical transmembrane segment at 41-61 (GVLAGIVLGDLVLTVLIALAV) threads the bilayer. Aspartate 50 provides a ligand contact to Ca(2+). The Cytoplasmic portion of the chain corresponds to 62–113 (YFLGRLVPRGRGAAEAATRKQRITETESPYQELQGQRSDVYSDLNTQRPYYK). The disordered stretch occupies residues 75–113 (AEAATRKQRITETESPYQELQGQRSDVYSDLNTQRPYYK). Positions 80 to 108 (RKQRITETESPYQELQGQRSDVYSDLNTQ) constitute an ITAM domain. The span at 87 to 113 (TESPYQELQGQRSDVYSDLNTQRPYYK) shows a compositional bias: polar residues. Tyrosine 91 and tyrosine 102 each carry phosphotyrosine.

This sequence belongs to the TYROBP family. Homodimer; disulfide-linked. Homotrimer; disulfide-linked. Homotetramer; disulfide-linked. Homotrimers and homotetramers form when low levels of partner receptors are available and is competitive with assembly with interacting receptors. They may represent alternative oligomerization states or may be intermediates in the receptor assembly process. Binding of a metal cation aids in homooligomerization through coordination of the metal ion by the subunits of the oligomer. Interacts with TREM1. Interacts with TREM2. Interacts with CLECSF5. Interacts with CD300LB and CD300C2. Interacts with CD300E. Interacts (via ITAM domain) with SYK (via SH2 domains); activates SYK mediating neutrophils and macrophages integrin-mediated activation. Interacts with KLRC2. Interacts with CD300H. Interacts with KLRD1. In terms of processing, following ligand binding by associated receptors, tyrosine phosphorylated in the ITAM domain which leads to activation of additional tyrosine kinases and subsequent cell activation.

The protein localises to the cell membrane. In terms of biological role, adapter protein which non-covalently associates with activating receptors found on the surface of a variety of immune cells to mediate signaling and cell activation following ligand binding by the receptors. TYROBP is tyrosine-phosphorylated in the ITAM domain following ligand binding by the associated receptors which leads to activation of additional tyrosine kinases and subsequent cell activation. Also has an inhibitory role in some cells. Non-covalently associates with activating receptors of the CD300 family to mediate cell activation. Also mediates cell activation through association with activating receptors of the CD200R family. Required for neutrophil activation mediated by integrin. Required for the activation of myeloid cells mediated by the CLEC5A/MDL1 receptor. Associates with natural killer (NK) cell receptors such as the KLRD1/KLRC2 heterodimer to mediate NK cell activation. Associates with TREM1 to mediate activation of neutrophils and monocytes. Associates with TREM2 on monocyte-derived dendritic cells to mediate up-regulation of chemokine receptor CCR7 and dendritic cell maturation and survival. Association with TREM2 mediates cytokine-induced formation of multinucleated giant cells which are formed by the fusion of macrophages. Stabilizes the TREM2 C-terminal fragment (TREM2-CTF) produced by TREM2 ectodomain shedding which suppresses the release of pro-inflammatory cytokines. In microglia, required with TREM2 for phagocytosis of apoptotic neurons. Required with ITGAM/CD11B in microglia to control production of microglial superoxide ions which promote the neuronal apoptosis that occurs during brain development. Promotes pro-inflammatory responses in microglia following nerve injury which accelerates degeneration of injured neurons. Positively regulates the expression of the IRAK3/IRAK-M kinase and IL10 production by liver dendritic cells and inhibits their T cell allosimulatory ability. Negatively regulates B cell proliferation. Required for CSF1-mediated osteoclast cytoskeletal organization. Positively regulates multinucleation during osteoclast development. The polypeptide is TYRO protein tyrosine kinase-binding protein (Macaca mulatta (Rhesus macaque)).